Consider the following 327-residue polypeptide: MHPQQLVVSWFSLVLLTSPIVAIWELEKNVYVVELDWYPDAPGETVVLRCDTPEEDGITWTSDQSSEVLGSGKTLTVQVKEFGDAGQYTCHKGGEVLSRSLLLLHKKEDGIWSTDILKDQKEPKAKSFLKCEAKDYSGHFTCWWLTAISTDLKFSVKSSRGSSDPRGVTCGAASLSTEKVIVDHREYKKYTVECQEGSACPAAEESLPIEVVVEAVHKLKYENYTSSFFIRDIIKPDPPKNLQLRPLKNSRQVEVSWEYPDTWSTPHSYFSLTFCVQVQGKNKREKKLFMDQTSAKVTCHKDASIRVQARDRYYNSFWSEWASVSCS.

The first 22 residues, 1–22 (MHPQQLVVSWFSLVLLTSPIVA), serve as a signal peptide directing secretion. The region spanning 23–106 (IWELEKNVYV…LSRSLLLLHK (84 aa)) is the Ig-like C2-type domain. A disulfide bridge connects residues C50 and C90. Residue N223 is glycosylated (N-linked (GlcNAc...) asparagine). A Fibronectin type-III domain is found at 238-327 (PPKNLQLRPL…WSEWASVSCS (90 aa)).

It belongs to the IL-12B family. In terms of assembly, heterodimer with IL12A; disulfide-linked. The heterodimer is known as interleukin IL-12. Heterodimer with IL23A; disulfide-linked. The heterodimer is known as interleukin IL-23. Also secreted as a monomer. Interacts with NBR1; this interaction promotes IL-12 secretion.

It is found in the secreted. Its function is as follows. Cytokine that can act as a growth factor for activated T and NK cells, enhance the lytic activity of NK/lymphokine-activated killer cells, and stimulate the production of IFN-gamma by resting PBMC. Functionally, associates with IL23A to form the IL-23 interleukin, a heterodimeric cytokine which functions in innate and adaptive immunity. IL-23 may constitute with IL-17 an acute response to infection in peripheral tissues. IL-23 binds to a heterodimeric receptor complex composed of IL12RB1 and IL23R, activates the Jak-Stat signaling cascade, stimulates memory rather than naive T-cells and promotes production of pro-inflammatory cytokines. IL-23 induces autoimmune inflammation and thus may be responsible for autoimmune inflammatory diseases and may be important for tumorigenesis. The polypeptide is Interleukin-12 subunit beta (IL12B) (Cervus elaphus (Red deer)).